A 416-amino-acid chain; its full sequence is Serine hydroxymethyltransferase (416 aa).

(6S)-5,6,7,8-tetrahydrofolate is bound by residues Leu121 and 125-127 (GHL). Lys229 bears the N6-(pyridoxal phosphate)lysine mark. (6S)-5,6,7,8-tetrahydrofolate is bound by residues Glu245 and 354-356 (SPF).

The protein belongs to the SHMT family. Homodimer. The cofactor is pyridoxal 5'-phosphate.

The protein resides in the cytoplasm. The catalysed reaction is (6R)-5,10-methylene-5,6,7,8-tetrahydrofolate + glycine + H2O = (6S)-5,6,7,8-tetrahydrofolate + L-serine. The protein operates within one-carbon metabolism; tetrahydrofolate interconversion. It participates in amino-acid biosynthesis; glycine biosynthesis; glycine from L-serine: step 1/1. In terms of biological role, catalyzes the reversible interconversion of serine and glycine with tetrahydrofolate (THF) serving as the one-carbon carrier. This reaction serves as the major source of one-carbon groups required for the biosynthesis of purines, thymidylate, methionine, and other important biomolecules. Also exhibits THF-independent aldolase activity toward beta-hydroxyamino acids, producing glycine and aldehydes, via a retro-aldol mechanism. This Aliivibrio fischeri (strain ATCC 700601 / ES114) (Vibrio fischeri) protein is Serine hydroxymethyltransferase.